The sequence spans 229 residues: ATPase SWSAP1 (229 aa).

Residues 209–229 form a disordered region; it reads PWPTQAGDPSSGKGSSSGGQP.

Interacts with ZSWIM7; they form a functional complex involved in homologous recombination repair and stabilize each other. Interacts with RAD51, RAD51B, RAD51C, RAD51D and XRCC3; involved in homologous recombination repair.

Its subcellular location is the nucleus. Functionally, ATPase which is preferentially stimulated by single-stranded DNA and is involved in homologous recombination repair (HRR). Has a DNA-binding activity which is independent of its ATPase activity. The protein is ATPase SWSAP1 (SWSAP1) of Homo sapiens (Human).